A 217-amino-acid polypeptide reads, in one-letter code: Ribonuclease HII (217 aa).

In terms of domain architecture, RNase H type-2 spans 16–217 (YCIAGVDEVG…VARVLGTYHD (202 aa)). A divalent metal cation contacts are provided by D22, E23, and D114.

It belongs to the RNase HII family. Mn(2+) is required as a cofactor. Mg(2+) serves as cofactor.

It is found in the cytoplasm. The catalysed reaction is Endonucleolytic cleavage to 5'-phosphomonoester.. Endonuclease that specifically degrades the RNA of RNA-DNA hybrids. In Colwellia psychrerythraea (strain 34H / ATCC BAA-681) (Vibrio psychroerythus), this protein is Ribonuclease HII.